We begin with the raw amino-acid sequence, 352 residues long: Glycoprotein integral membrane protein 1 (352 aa).

An N-terminal signal peptide occupies residues 1 to 25 (MASRCKIHLTVAYLLILCILASAQS). Residues 26–281 (KQMTTETVVL…KLRRFLSDSV (256 aa)) lie on the Extracellular side of the membrane. 6 N-linked (GlcNAc...) asparagine glycosylation sites follow: asparagine 36, asparagine 44, asparagine 89, asparagine 109, asparagine 151, and asparagine 197. The segment at 206–245 (NSETTQEEIAAPGKLPETPLRMDPETLYESREEEERRSDS) is disordered. Residues 225–244 (LRMDPETLYESREEEERRSD) are compositionally biased toward basic and acidic residues. A helical membrane pass occupies residues 282-302 (PLFFLVMWVVVVGVAGSAVVI). The Cytoplasmic portion of the chain corresponds to 303–352 (KILDLIFPSCEHRGFFHLNPETLMPDDEKVSLIDNMEGDMTEKSILLIEK).

The protein localises to the membrane. In Danio rerio (Zebrafish), this protein is Glycoprotein integral membrane protein 1 (ginm1).